A 693-amino-acid chain; its full sequence is Elongation factor G (693 aa).

Positions 8–284 (DMTRNVGIMA…AIVNYMPAPT (277 aa)) constitute a tr-type G domain. GTP is bound by residues 17–24 (AHIDAGKT), 81–85 (DTPGH), and 135–138 (NKMD).

It belongs to the TRAFAC class translation factor GTPase superfamily. Classic translation factor GTPase family. EF-G/EF-2 subfamily.

The protein localises to the cytoplasm. In terms of biological role, catalyzes the GTP-dependent ribosomal translocation step during translation elongation. During this step, the ribosome changes from the pre-translocational (PRE) to the post-translocational (POST) state as the newly formed A-site-bound peptidyl-tRNA and P-site-bound deacylated tRNA move to the P and E sites, respectively. Catalyzes the coordinated movement of the two tRNA molecules, the mRNA and conformational changes in the ribosome. In Fusobacterium nucleatum subsp. nucleatum (strain ATCC 25586 / DSM 15643 / BCRC 10681 / CIP 101130 / JCM 8532 / KCTC 2640 / LMG 13131 / VPI 4355), this protein is Elongation factor G.